Here is a 322-residue protein sequence, read N- to C-terminus: Cytochrome f (322 aa).

The signal sequence occupies residues 1–35; that stretch reads MQTRNTFSWTWIREEITRSISVSLMIYIITWSSIS. The heme site is built by tyrosine 38, cysteine 58, cysteine 61, and histidine 62. Residues 288-308 traverse the membrane as a helical segment; it reads VQGLLFFLGSVVLAQIFLVLK.

The protein belongs to the cytochrome f family. As to quaternary structure, the 4 large subunits of the cytochrome b6-f complex are cytochrome b6, subunit IV (17 kDa polypeptide, petD), cytochrome f and the Rieske protein, while the 4 small subunits are PetG, PetL, PetM and PetN. The complex functions as a dimer. The cofactor is heme.

Its subcellular location is the plastid. It is found in the chloroplast thylakoid membrane. Functionally, component of the cytochrome b6-f complex, which mediates electron transfer between photosystem II (PSII) and photosystem I (PSI), cyclic electron flow around PSI, and state transitions. The chain is Cytochrome f from Aethionema cordifolium (Lebanon stonecress).